The sequence spans 283 residues: Cyclin-C (283 aa).

The region spanning 20 to 151 is the Cyclin N-terminal domain; it reads DLLKERQKDL…LLELMDCCLI (132 aa). The disordered stretch occupies residues 252–283; sequence TILSKMPKPKPPPNSEGEQGPNGSQNSSYSQS. The segment covering 272–283 has biased composition (polar residues); it reads PNGSQNSSYSQS. Serine 275 carries the phosphoserine modification.

The protein belongs to the cyclin family. Cyclin C subfamily. Component of the Mediator complex, which is composed of MED1, MED4, MED6, MED7, MED8, MED9, MED10, MED11, MED12, MED13, MED13L, MED14, MED15, MED16, MED17, MED18, MED19, MED20, MED21, MED22, MED23, MED24, MED25, MED26, MED27, MED29, MED30, MED31, CCNC, CDK8 and CDC2L6/CDK11. The MED12, MED13, CCNC and CDK8 subunits form a distinct module termed the CDK8 module. Mediator containing the CDK8 module is less active than Mediator lacking this module in supporting transcriptional activation. Individual preparations of the Mediator complex lacking one or more distinct subunits have been variously termed ARC, CRSP, DRIP, PC2, SMCC and TRAP. The cylin/CDK pair formed by CCNC/CDK8 also associates with the large subunit of RNA polymerase II.

It localises to the nucleus. In terms of biological role, component of the Mediator complex, a coactivator involved in regulated gene transcription of nearly all RNA polymerase II-dependent genes. Mediator functions as a bridge to convey information from gene-specific regulatory proteins to the basal RNA polymerase II transcription machinery. Mediator is recruited to promoters by direct interactions with regulatory proteins and serves as a scaffold for the assembly of a functional preinitiation complex with RNA polymerase II and the general transcription factors. Binds to and activates cyclin-dependent kinase CDK8 that phosphorylates the CTD (C-terminal domain) of the large subunit of RNA polymerase II (RNAp II), which may inhibit the formation of a transcription initiation complex. The sequence is that of Cyclin-C (Ccnc) from Mus musculus (Mouse).